The primary structure comprises 280 residues: Manganese transport system membrane protein MntC (280 aa).

9 consecutive transmembrane segments (helical) span residues 16–36 (ALITSVTVGIVSGVIGSFIIL), 41–61 (LMGDAISHAVLPGVAISYMMG), 62–82 (MNFFIGAATFGIAAALGIGFV), 92–112 (TAIGIVFSAFFALGIILISFA), 137–157 (TIIIAILVISLVAIFYKEFLV), 168–188 (YGLNVRFLHYFLMLLLTLVTV), 193–213 (TVGIILVVAMLITPAATAYLL), 221–241 (IMLASTFGAVSAIIGLYFSYI), and 244–264 (LASGAAMVLVATIIFFIAFLF).

Belongs to the ABC-3 integral membrane protein family.

It localises to the cell membrane. This protein is probably a component of a manganese permease, a binding protein-dependent, ATP-driven transport system. The protein is Manganese transport system membrane protein MntC (mntC) of Listeria innocua serovar 6a (strain ATCC BAA-680 / CLIP 11262).